The chain runs to 194 residues: uncharacterized protein (194 aa).

The HTH tetR-type domain occupies 2 to 62 (QGPRERMVVS…CEAVDYAGEH (61 aa)). The H-T-H motif DNA-binding region spans 25 to 44 (AISDVLQHSGAPRGSAYHYF).

This is an uncharacterized protein from Mycobacterium tuberculosis (strain CDC 1551 / Oshkosh).